Here is a 278-residue protein sequence, read N- to C-terminus: Ribosomal RNA small subunit methyltransferase A (278 aa).

Positions 28, 30, 55, 77, 103, and 122 each coordinate S-adenosyl-L-methionine.

It belongs to the class I-like SAM-binding methyltransferase superfamily. rRNA adenine N(6)-methyltransferase family. RsmA subfamily.

It localises to the cytoplasm. The enzyme catalyses adenosine(1518)/adenosine(1519) in 16S rRNA + 4 S-adenosyl-L-methionine = N(6)-dimethyladenosine(1518)/N(6)-dimethyladenosine(1519) in 16S rRNA + 4 S-adenosyl-L-homocysteine + 4 H(+). Specifically dimethylates two adjacent adenosines (A1518 and A1519) in the loop of a conserved hairpin near the 3'-end of 16S rRNA in the 30S particle. May play a critical role in biogenesis of 30S subunits. The protein is Ribosomal RNA small subunit methyltransferase A of Cereibacter sphaeroides (strain ATCC 17025 / ATH 2.4.3) (Rhodobacter sphaeroides).